We begin with the raw amino-acid sequence, 414 residues long: Multifunctional CCA protein (414 aa).

ATP is bound by residues Gly8 and Arg11. The CTP site is built by Gly8 and Arg11. Residues Glu21 and Asp23 each contribute to the Mg(2+) site. 3 residues coordinate ATP: Arg91, Arg137, and Arg140. Positions 91, 137, and 140 each coordinate CTP. Residues 228 to 329 (TGIHTMMTVA…LKLFDAIDVW (102 aa)) enclose the HD domain.

It belongs to the tRNA nucleotidyltransferase/poly(A) polymerase family. Bacterial CCA-adding enzyme type 1 subfamily. Monomer. Can also form homodimers and oligomers. The cofactor is Mg(2+). Requires Ni(2+) as cofactor.

It catalyses the reaction a tRNA precursor + 2 CTP + ATP = a tRNA with a 3' CCA end + 3 diphosphate. The catalysed reaction is a tRNA with a 3' CCA end + 2 CTP + ATP = a tRNA with a 3' CCACCA end + 3 diphosphate. Functionally, catalyzes the addition and repair of the essential 3'-terminal CCA sequence in tRNAs without using a nucleic acid template. Adds these three nucleotides in the order of C, C, and A to the tRNA nucleotide-73, using CTP and ATP as substrates and producing inorganic pyrophosphate. tRNA 3'-terminal CCA addition is required both for tRNA processing and repair. Also involved in tRNA surveillance by mediating tandem CCA addition to generate a CCACCA at the 3' terminus of unstable tRNAs. While stable tRNAs receive only 3'-terminal CCA, unstable tRNAs are marked with CCACCA and rapidly degraded. This Pectobacterium atrosepticum (strain SCRI 1043 / ATCC BAA-672) (Erwinia carotovora subsp. atroseptica) protein is Multifunctional CCA protein.